The sequence spans 387 residues: Mitochondrial import inner membrane translocase subunit TIM50 (387 aa).

A mitochondrion-targeting transit peptide spans 1-26; it reads MSAVSVYPMCVRASRGLLRLRQGARC. Residues 27-100 are Mitochondrial matrix-facing; it reads STAPPLLDVV…QKENTAYAKK (74 aa). The segment at 61–93 is disordered; the sequence is LQQQQKSQEQPPPEGEDSGHKQDEQGEDKKQKE. The segment covering 77–93 has biased composition (basic and acidic residues); the sequence is DSGHKQDEQGEDKKQKE. The helical transmembrane segment at 101 to 121 threads the bilayer; sequence MVLRLAGIMGLGGTVGIVYIF. Topologically, residues 122-387 are mitochondrial intermembrane; sequence GSNSVDEQGN…AGRFWSRKQQ (266 aa). An FCP1 homology domain is found at 178–321; the sequence is YYQPPYTLVL…YDLAAFLKTI (144 aa).

This sequence belongs to the TIM50 family. In terms of assembly, component of the TIM23 complex at least composed of timm23, timm17 and timm50.

It localises to the mitochondrion inner membrane. Its function is as follows. Essential component of the TIM23 complex, a complex that mediates the translocation of transit peptide-containing proteins across the mitochondrial inner membrane. This is Mitochondrial import inner membrane translocase subunit TIM50 (timm50) from Danio rerio (Zebrafish).